Consider the following 41-residue polypeptide: Photosystem II reaction center protein L (41 aa).

The helical transmembrane segment at 20–40 (SLYLGLLLVFVVGLLFSSYFL) threads the bilayer.

The protein belongs to the PsbL family. In terms of assembly, PSII is composed of 1 copy each of membrane proteins PsbA, PsbB, PsbC, PsbD, PsbE, PsbF, PsbH, PsbI, PsbJ, PsbK, PsbL, PsbM, PsbT, PsbX, PsbY, PsbZ, Psb30/Ycf12, peripheral proteins PsbO, CyanoQ (PsbQ), PsbU, PsbV and a large number of cofactors. It forms dimeric complexes.

Its subcellular location is the cellular thylakoid membrane. Its function is as follows. One of the components of the core complex of photosystem II (PSII). PSII is a light-driven water:plastoquinone oxidoreductase that uses light energy to abstract electrons from H(2)O, generating O(2) and a proton gradient subsequently used for ATP formation. It consists of a core antenna complex that captures photons, and an electron transfer chain that converts photonic excitation into a charge separation. This subunit is found at the monomer-monomer interface and is required for correct PSII assembly and/or dimerization. The sequence is that of Photosystem II reaction center protein L from Synechococcus sp. (strain JA-3-3Ab) (Cyanobacteria bacterium Yellowstone A-Prime).